A 410-amino-acid polypeptide reads, in one-letter code: Platelet-activating factor acetylhydrolase IB subunit alpha (410 aa).

Residues 1 to 38 (MVLSQRQRDELNRAIADYLRSNGYEEAYSVFKKEAELD) are required for self-association and interaction with PAFAH1B2 and PAFAH1B3. An interaction with NDE1 region spans residues 1 to 66 (MVLSQRQRDE…SVIRLQKKVM (66 aa)). The segment at 1-102 (MVLSQRQRDE…EWIPRPPEKY (102 aa)) is interaction with NDEL1. Residues 7-39 (QRDELNRAIADYLRSNGYEEAYSVFKKEAELDM) form the LisH domain. The residue at position 53 (lysine 53) is an N6-acetyllysine. Residues 56–82 (TSVIRLQKKVMELESKLNEAKEEFTSG) adopt a coiled-coil conformation. The interval 83 to 410 (GPLGQKRDPK…DQTVKVWECR (328 aa)) is interaction with dynein and dynactin. WD repeat units follow at residues 106-147 (GHRS…RTLK), 148-187 (GHTD…CIRT), 190-229 (GHDH…CVKT), 232-271 (GHRE…CKAE), 274-333 (EHEH…CLMT), 336-377 (GHDN…KTLN), and 379-410 (HEHF…WECR). Serine 109 is modified (phosphoserine). Residues 367-409 (YKNKRCMKTLNAHEHFVTSLDFHKTAPYVVTGFVDQTVKVWEC) form an interaction with DCX region. Residues 388–410 (FHKTAPYVVTGFVDQTVKVWECR) form an interaction with NDEL1 region.

Belongs to the WD repeat LIS1/nudF family. Can self-associate. Component of the cytosolic PAF-AH (I) heterotetrameric enzyme, which is composed of PAFAH1B1 (beta), PAFAH1B2 (alpha2) and PAFAH1B3 (alpha1) subunits. The catalytic activity of the enzyme resides in the alpha1 (PAFAH1B3) and alpha2 (PAFAH1B2) subunits, whereas the beta subunit (PAFAH1B1) has regulatory activity. Trimer formation is not essential for the catalytic activity. Interacts with the catalytic dimer of PAF-AH (I) heterotetrameric enzyme: interacts with PAFAH1B2 homodimer (alpha2/alpha2 homodimer), PAFAH1B3 homodimer (alpha1/alpha1 homodimer) and PAFAH1B2-PAFAH1B3 heterodimer (alpha2/alpha1 heterodimer). Interacts with DCX, dynein, dynactin, IQGAP1, KATNB1, NDE1, NDEL1, NUDC and RSN. Interacts with DISC1, and this interaction is enhanced by NDEL1. Interacts with DAB1 when DAB1 is phosphorylated in response to RELN/reelin signaling. Interacts with INTS13. Interacts with DCDC1.

The protein localises to the cytoplasm. Its subcellular location is the cytoskeleton. It is found in the microtubule organizing center. It localises to the centrosome. The protein resides in the spindle. The protein localises to the nucleus membrane. Its function is as follows. Regulatory subunit (beta subunit) of the cytosolic type I platelet-activating factor (PAF) acetylhydrolase (PAF-AH (I)), an enzyme that catalyzes the hydrolyze of the acetyl group at the sn-2 position of PAF and its analogs and participates in PAF inactivation. Regulates the PAF-AH (I) activity in a catalytic dimer composition-dependent manner. Positively regulates the activity of the minus-end directed microtubule motor protein dynein. May enhance dynein-mediated microtubule sliding by targeting dynein to the microtubule plus end. Required for several dynein- and microtubule-dependent processes such as the maintenance of Golgi integrity, the peripheral transport of microtubule fragments and the coupling of the nucleus and centrosome. Required during brain development for the proliferation of neuronal precursors and the migration of newly formed neurons from the ventricular/subventricular zone toward the cortical plate. Neuronal migration involves a process called nucleokinesis, whereby migrating cells extend an anterior process into which the nucleus subsequently translocates. During nucleokinesis dynein at the nuclear surface may translocate the nucleus towards the centrosome by exerting force on centrosomal microtubules. Also required for proper activation of Rho GTPases and actin polymerization at the leading edge of locomoting cerebellar neurons and postmigratory hippocampal neurons in response to calcium influx triggered via NMDA receptors. May also play a role in other forms of cell locomotion including the migration of fibroblasts during wound healing. Required for dynein recruitment to microtubule plus ends and BICD2-bound cargos. May modulate the Reelin pathway through interaction of the PAF-AH (I) catalytic dimer with VLDLR. This is Platelet-activating factor acetylhydrolase IB subunit alpha from Pan troglodytes (Chimpanzee).